Here is a 417-residue protein sequence, read N- to C-terminus: Phosphoglycerate kinase (417 aa).

Residues Val-23, Asp-24, Phe-25, Asn-26, Gln-38, Arg-39, Ser-62, His-63, Gly-65, Arg-66, Leu-121, Arg-122, His-169, and Arg-170 each coordinate (2R)-3-phosphoglycerate. Gly-213 provides a ligand contact to ADP. A CDP-binding site is contributed by Gly-213. The AMP site is built by Ala-214 and Lys-215. Ala-214 contributes to the ATP binding site. Residue Ala-214 participates in Mg(2+) binding. Residue Asp-218 coordinates CDP. Position 218 (Asp-218) interacts with Mg(2+). Position 219 (Lys-219) interacts with AMP. Lys-219 provides a ligand contact to ATP. Gly-237 serves as a coordination point for ADP. Position 237 (Gly-237) interacts with CDP. The AMP site is built by Gly-238 and Gly-312. Residues Gly-238 and Gly-312 each contribute to the ATP site. Gly-337 and Phe-342 together coordinate CDP. ADP is bound at residue Phe-342. Position 343 (Glu-343) interacts with AMP. Residues Glu-343, Asp-374, and Thr-375 each contribute to the ATP site. Residue Asp-374 coordinates Mg(2+).

It belongs to the phosphoglycerate kinase family. Monomer. Mg(2+) is required as a cofactor.

The protein localises to the cytoplasm. It localises to the secreted. It is found in the cell wall. Its subcellular location is the mitochondrion. The enzyme catalyses (2R)-3-phosphoglycerate + ATP = (2R)-3-phospho-glyceroyl phosphate + ADP. The protein operates within carbohydrate degradation; glycolysis; pyruvate from D-glyceraldehyde 3-phosphate: step 2/5. In terms of biological role, catalyzes one of the two ATP producing reactions in the glycolytic pathway via the reversible conversion of 1,3-diphosphoglycerate to 3-phosphoglycerate. Both L- and D- forms of purine and pyrimidine nucleotides can be used as substrates, but the activity is much lower on pyrimidines. Negatively regulates the biosynthesis of acetyl-CoA from pyruvate in the mitochondrion. The protein is Phosphoglycerate kinase (PGK1) of Candida albicans (strain SC5314 / ATCC MYA-2876) (Yeast).